The primary structure comprises 530 residues: Bifunctional purine biosynthesis protein PurH (530 aa).

The 148-residue stretch at 1–148 (MNNARPIRRA…KNHKDVTIVV (148 aa)) folds into the MGS-like domain.

The protein belongs to the PurH family.

It catalyses the reaction (6R)-10-formyltetrahydrofolate + 5-amino-1-(5-phospho-beta-D-ribosyl)imidazole-4-carboxamide = 5-formamido-1-(5-phospho-D-ribosyl)imidazole-4-carboxamide + (6S)-5,6,7,8-tetrahydrofolate. The catalysed reaction is IMP + H2O = 5-formamido-1-(5-phospho-D-ribosyl)imidazole-4-carboxamide. Its pathway is purine metabolism; IMP biosynthesis via de novo pathway; 5-formamido-1-(5-phospho-D-ribosyl)imidazole-4-carboxamide from 5-amino-1-(5-phospho-D-ribosyl)imidazole-4-carboxamide (10-formyl THF route): step 1/1. It participates in purine metabolism; IMP biosynthesis via de novo pathway; IMP from 5-formamido-1-(5-phospho-D-ribosyl)imidazole-4-carboxamide: step 1/1. In Vibrio parahaemolyticus serotype O3:K6 (strain RIMD 2210633), this protein is Bifunctional purine biosynthesis protein PurH.